The primary structure comprises 535 residues: Sodium/hydrogen exchanger 9B2 (535 aa).

Over residues 1 to 14 (MRNQDKRAAHKDSE) the composition is skewed to basic and acidic residues. Residues 1-70 (MRNQDKRAAH…TPAEPNHLQR (70 aa)) form a disordered region. The Cytoplasmic portion of the chain corresponds to 1–85 (MRNQDKRAAH…ACPPRGLLAR (85 aa)). Composition is skewed to polar residues over residues 16–34 (STEV…QETG) and 46–58 (TEGS…NEKM). The chain crosses the membrane as a helical span at residues 86–103 (VITNVTMVILLWAVVWSV). The Extracellular portion of the chain corresponds to 104–112 (TGSECLPGG). A helical transmembrane segment spans residues 113-132 (NLFGIIMLFYCAIIGGKLFG). The Cytoplasmic segment spans residues 133–143 (LIKLPTLPPLP). A helical transmembrane segment spans residues 144 to 160 (PLLGMLLAGFLIRNVPV). Residues 161-170 (ISDNIQIKHK) are Extracellular-facing. The helical transmembrane segment at 171–188 (WSSALRSIALSVILVRAG) threads the bilayer. Residues 189 to 199 (LGLDSNALKKL) lie on the Cytoplasmic side of the membrane. The helical transmembrane segment at 200–226 (KGVCVRLSLGPCLIEACTSAVLAYFLM) threads the bilayer. Topologically, residues 227–232 (GLPWQW) are extracellular. Residues 233–241 (GFMLGFVLG) form a helical membrane-spanning segment. At 242–269 (AVSPAVVVPSMLLLQEGGYGVEKGIPTL) the chain is on the cytoplasmic side. The Na(+) site is built by Val-243, Gly-274, Asp-277, and Asp-278. A helical transmembrane segment spans residues 270–289 (LMAAGSFDDILAITGFNTCL). The Extracellular portion of the chain corresponds to 290–299 (GMAFSTGSTV). A helical membrane pass occupies residues 300–323 (FNVLKGVLEVIIGVVTGLVLGFFI). Over 324–338 (QYFPSSDQDNLVWKR) the chain is Cytoplasmic. The chain crosses the membrane as a helical span at residues 339–356 (AFLVLGLSVLAVFSSTYF). Residues 357–360 (GFPG) lie on the Extracellular side of the membrane. Residues 361–372 (SGGLCTLVTAFL) traverse the membrane as a helical segment. Over 373 to 389 (AGRGWASTKTDVEKVIA) the chain is Cytoplasmic. The helical transmembrane segment at 390 to 410 (VAWDIFQPLLFGLIGAEVLIT) threads the bilayer. At 411–416 (ALRPET) the chain is on the extracellular side. Residues 417 to 439 (IGLCVATLGIAVLIRILVTYLMV) traverse the membrane as a helical segment. At 440–460 (CFAGFNIKEKIFISFAWLPKA) the chain is on the cytoplasmic side. A helical transmembrane segment spans residues 461–472 (TVQAAIGSVALD). At 473–485 (TARSHGEKQLEGY) the chain is on the extracellular side. The chain crosses the membrane as a helical span at residues 486 to 508 (GMDVLTVAFLSIIITAPVGSLLI). Residues 509 to 535 (GLLGPRLLQKAEQNKDEEDQGETSIQV) are Cytoplasmic-facing.

This sequence belongs to the monovalent cation:proton antiporter 1 (CPA1) transporter (TC 2.A.36) family. As to quaternary structure, homodimer; dimerization is essential for SLC9B2 activity. Lipids seem to play a role in the stabilization of the dimerization subdomain.

Its subcellular location is the cell membrane. It is found in the mitochondrion membrane. The protein localises to the endosome membrane. It localises to the recycling endosome membrane. The protein resides in the lysosome membrane. Its subcellular location is the cytoplasmic vesicle. It is found in the secretory vesicle. The protein localises to the synaptic vesicle membrane. It localises to the cell projection. The protein resides in the cilium. Its subcellular location is the flagellum membrane. It is found in the basolateral cell membrane. The protein localises to the apical cell membrane. It catalyses the reaction Li(+)(out) + H(+)(in) = Li(+)(in) + H(+)(out). The catalysed reaction is Li(+)(in) + Na(+)(out) = Li(+)(out) + Na(+)(in). It carries out the reaction Na(+)(in) + H(+)(out) = Na(+)(out) + H(+)(in). With respect to regulation, allosterically inhibited by the N-terminal domain. Inhibited by phloretin. Its function is as follows. Electroneutral Na(+) Li(+)/H(+) antiporter that extrudes Na(+) or Li(+) in exchange for external protons across the membrane. Uses the proton gradient/membrane potential to extrude sodium. Contributes to the regulation of intracellular pH and sodium homeostasis. Also able to mediate Na(+)/Li(+) antiporter activity in kidney. May play a physiological role in renal tubular function and blood pressure homeostasis. Plays an important role for insulin secretion and clathrin-mediated endocytosis in beta-cells. Involved in sperm motility and fertility. It is controversial whether SLC9B2 plays a role in osteoclast differentiation or not. This is Sodium/hydrogen exchanger 9B2 (SLC9B2) from Bison bison bison (North American plains bison).